The sequence spans 362 residues: Phenylalanine--tRNA ligase alpha subunit (362 aa).

Glu263 serves as a coordination point for Mg(2+).

This sequence belongs to the class-II aminoacyl-tRNA synthetase family. Phe-tRNA synthetase alpha subunit type 1 subfamily. In terms of assembly, tetramer of two alpha and two beta subunits. The cofactor is Mg(2+).

The protein localises to the cytoplasm. The enzyme catalyses tRNA(Phe) + L-phenylalanine + ATP = L-phenylalanyl-tRNA(Phe) + AMP + diphosphate + H(+). The polypeptide is Phenylalanine--tRNA ligase alpha subunit (Caulobacter sp. (strain K31)).